A 257-amino-acid polypeptide reads, in one-letter code: Deoxyribose-phosphate aldolase (257 aa).

D102 (proton donor/acceptor) is an active-site residue. The Schiff-base intermediate with acetaldehyde role is filled by K166. K198 (proton donor/acceptor) is an active-site residue.

The protein belongs to the DeoC/FbaB aldolase family. DeoC type 2 subfamily.

It localises to the cytoplasm. It catalyses the reaction 2-deoxy-D-ribose 5-phosphate = D-glyceraldehyde 3-phosphate + acetaldehyde. It participates in carbohydrate degradation; 2-deoxy-D-ribose 1-phosphate degradation; D-glyceraldehyde 3-phosphate and acetaldehyde from 2-deoxy-alpha-D-ribose 1-phosphate: step 2/2. In terms of biological role, catalyzes a reversible aldol reaction between acetaldehyde and D-glyceraldehyde 3-phosphate to generate 2-deoxy-D-ribose 5-phosphate. This is Deoxyribose-phosphate aldolase from Shewanella woodyi (strain ATCC 51908 / MS32).